The sequence spans 1530 residues: Synaptonemal complex protein 2 (1530 aa).

A compositionally biased stretch (basic and acidic residues) spans 439–461 (EKSKSPKEFAKPSKYIKNSDKGN). The disordered stretch occupies residues 439–480 (EKSKSPKEFAKPSKYIKNSDKGNRNNSQLEKTTPSKRKMSEA). Residues Ser-457 and Ser-465 each carry the phosphoserine modification. Thr-471 carries the phosphothreonine modification. Phosphoserine occurs at positions 494, 519, 529, and 538. The disordered stretch occupies residues 496–555 (VLFSNTSIPPRRRRIKPPLQMTSSAEKPSVSQTSENRVDNAASLKSRSSEGRHRRDNIDK). A compositionally biased stretch (polar residues) spans 515–530 (QMTSSAEKPSVSQTSE). The span at 542–555 (RSSEGRHRRDNIDK) shows a compositional bias: basic and acidic residues. Position 619 is a phosphothreonine (Thr-619). Disordered regions lie at residues 653–676 (QKSSSSISDHNSEGTGKVKYKKEQ), 693–717 (HNQQQNHPKYSGQKNTENAKQSDWP), and 755–795 (DKNP…SKGK). Ser-660 and Ser-664 each carry phosphoserine. Polar residues-rich tracts occupy residues 695–713 (QQQNHPKYSGQKNTENAKQ) and 755–764 (DKNPSASKNV). Ser-936 is subject to Phosphoserine. Thr-938 carries the post-translational modification Phosphothreonine. Residues 962 to 1003 (QLIDYSRNKNVKNHKSGKSRSSLEKGQPSSKMTPSKNITKKM) are disordered. Positions 970–979 (KNVKNHKSGK) are enriched in basic residues. Over residues 988-998 (QPSSKMTPSKN) the composition is skewed to polar residues. Ser-1136, Ser-1138, Ser-1145, Ser-1161, and Ser-1177 each carry phosphoserine. Phosphothreonine is present on Thr-1189. Residues Ser-1204, Ser-1234, Ser-1253, Ser-1295, and Ser-1297 each carry the phosphoserine modification. At Thr-1339 the chain carries Phosphothreonine.

The protein belongs to the SYCP2 family. Component of the lateral elements of synaptonemal complexes. Heterodimer with SYCP3. Interacts with SMC1A and SMC3. Interacts with TEX11. Post-translationally, phosphorylated.

The protein resides in the nucleus. It localises to the chromosome. In terms of biological role, major component of the axial/lateral elements of synaptonemal complexes (SCS) during meiotic prophase. Plays a role in the assembly of synaptonemal complexes. Required for normal meiotic chromosome synapsis during oocyte and spermatocyte development and for normal male and female fertility. Required for insertion of SYCP3 into synaptonemal complexes. May be involved in the organization of chromatin by temporarily binding to DNA scaffold attachment regions. Requires SYCP3, but not SYCP1, in order to be incorporated into the axial/lateral elements. The polypeptide is Synaptonemal complex protein 2 (SYCP2) (Homo sapiens (Human)).